Here is a 556-residue protein sequence, read N- to C-terminus: Oxygen-dependent choline dehydrogenase (556 aa).

6–35 (DYIIIGAGSAGNVLAARLTEDPGVTVLLLE) serves as a coordination point for FAD. His475 serves as the catalytic Proton acceptor.

It belongs to the GMC oxidoreductase family. FAD is required as a cofactor.

It catalyses the reaction choline + A = betaine aldehyde + AH2. It carries out the reaction betaine aldehyde + NAD(+) + H2O = glycine betaine + NADH + 2 H(+). Its pathway is amine and polyamine biosynthesis; betaine biosynthesis via choline pathway; betaine aldehyde from choline (cytochrome c reductase route): step 1/1. Its function is as follows. Involved in the biosynthesis of the osmoprotectant glycine betaine. Catalyzes the oxidation of choline to betaine aldehyde and betaine aldehyde to glycine betaine at the same rate. This Xanthomonas euvesicatoria pv. vesicatoria (strain 85-10) (Xanthomonas campestris pv. vesicatoria) protein is Oxygen-dependent choline dehydrogenase.